The primary structure comprises 179 residues: Large ribosomal subunit protein uL5 (179 aa).

Belongs to the universal ribosomal protein uL5 family. As to quaternary structure, part of the 50S ribosomal subunit; part of the 5S rRNA/L5/L18/L25 subcomplex. Contacts the 5S rRNA and the P site tRNA. Forms a bridge to the 30S subunit in the 70S ribosome.

This is one of the proteins that bind and probably mediate the attachment of the 5S RNA into the large ribosomal subunit, where it forms part of the central protuberance. In the 70S ribosome it contacts protein S13 of the 30S subunit (bridge B1b), connecting the 2 subunits; this bridge is implicated in subunit movement. Contacts the P site tRNA; the 5S rRNA and some of its associated proteins might help stabilize positioning of ribosome-bound tRNAs. The chain is Large ribosomal subunit protein uL5 from Francisella philomiragia subsp. philomiragia (strain ATCC 25017 / CCUG 19701 / FSC 153 / O#319-036).